Here is a 249-residue protein sequence, read N- to C-terminus: Meiotic drive suppressor wtf25 (249 aa).

The interval 1–40 (MKNNYTSLKSPLDEEDELKTDHEIDLEKGPLPEYDSEEEG) is disordered. Over residues 19 to 30 (KTDHEIDLEKGP) the composition is skewed to basic and acidic residues. Transmembrane regions (helical) follow at residues 73–93 (LLII…PAFC), 110–130 (WTLF…LTYF), 151–170 (NMIF…LKAE), and 187–207 (SASA…AETV).

Belongs to the WTF family. In terms of assembly, homomer. Interacts with other proteins that exhibit high sequence similarity.

The protein resides in the spore membrane. It is found in the vacuole membrane. Acts as a suppressor component of the dual wtf meiotic drive system, and can suppress but not confer meiotic drive by compatible poisons. Wtf meiotic drive systems promote unequal transmission of alleles from the parental zygote to progeny spores by encoding a poison and an antidote from the same locus; the poison is trans-acting and forms toxic aggregates in all spores within an ascus, wherease the antidote is spore-specific and targets aggregates for degradation by the vacuole. Meiotic drive by wtf systems therefore lead to poisoning of all progeny that do not inherit the dual poison/antidote allele, or express a compatible antidote. This Schizosaccharomyces pombe (strain 972 / ATCC 24843) (Fission yeast) protein is Meiotic drive suppressor wtf25.